The primary structure comprises 234 residues: MRSTAAVLSILLPGALACLGYEGGVPKPTAHYSNSKVIEIAAGQVFDAGWAKYDRGSGACSGDSEGSWQDAVFYLHSGATLKNVIIGKDQAEGVHCDGPCNLEFVWFEDVCEDAITIKNDKAGQETWIVGGGAYHASDKIVQHNGCGTVNIINFYAEDYGKVYRSCGNCSSQCKRNVYVEGVTARDGGEVVGINSNYGDTATLKNVCTDASHPCVLYKGCAGGCEPSKVGYCSG.

The N-terminal stretch at methionine 1–alanine 17 is a signal peptide. Asparagine 168 carries N-linked (GlcNAc...) asparagine glycosylation.

It belongs to the polysaccharide lyase 3 family. Ca(2+) is required as a cofactor.

It localises to the secreted. The catalysed reaction is Eliminative cleavage of (1-&gt;4)-alpha-D-galacturonan to give oligosaccharides with 4-deoxy-alpha-D-galact-4-enuronosyl groups at their non-reducing ends.. Pectinolytic enzyme consist of four classes of enzymes: pectin lyase, polygalacturonase, pectin methylesterase and rhamnogalacturonase. Among pectinolytic enzymes, pectin lyase is the most important in depolymerization of pectin, since it cleaves internal glycosidic bonds of highly methylated pectins. Favors pectate, the anion, over pectin, the methyl ester. This Aspergillus terreus (strain NIH 2624 / FGSC A1156) protein is Probable pectate lyase F (plyF).